Consider the following 510-residue polypeptide: NAD(P)H-quinone oxidoreductase subunit 2 B, chloroplastic (510 aa).

The next 13 helical transmembrane spans lie at 24–44 (LLLFNGSFILPECILIFGLIL), 59–79 (WFYFISSTSLVMSITALLFRW), 99–119 (IFQFLILLCSTLCIPLSVEYI), 124–144 (MAITEFLLFILTATLGGMFLC), 149–169 (LITIFVALECFSLCSYLLSGY), 184–204 (LLMGGASSSILVHGFSWLYGL), 229–249 (ISIALIFITVGIGFKLSLAPF), 262–284 (TPVVAFLSVTSKVAASALATRIF), 295–315 (WHLLLEILAILSMILGNLIAI), 323–343 (MLAYSSIGQIGYVIIGIIVGD), 354–374 (YMLFYIAMNLGTFARIVLFGL), 395–415 (ALSLALCLLSLGGLPPLAGFF), and 418–438 (LHLFWCGWQAGLYFLVSIGLL).

It belongs to the complex I subunit 2 family. NDH is composed of at least 16 different subunits, 5 of which are encoded in the nucleus.

It is found in the plastid. It localises to the chloroplast thylakoid membrane. It catalyses the reaction a plastoquinone + NADH + (n+1) H(+)(in) = a plastoquinol + NAD(+) + n H(+)(out). The catalysed reaction is a plastoquinone + NADPH + (n+1) H(+)(in) = a plastoquinol + NADP(+) + n H(+)(out). Its function is as follows. NDH shuttles electrons from NAD(P)H:plastoquinone, via FMN and iron-sulfur (Fe-S) centers, to quinones in the photosynthetic chain and possibly in a chloroplast respiratory chain. The immediate electron acceptor for the enzyme in this species is believed to be plastoquinone. Couples the redox reaction to proton translocation, and thus conserves the redox energy in a proton gradient. This Lemna minor (Common duckweed) protein is NAD(P)H-quinone oxidoreductase subunit 2 B, chloroplastic.